The sequence spans 103 residues: uncharacterized protein (103 aa).

A helical transmembrane segment spans residues 38–58 (FTTLITIYVAAFYTGVIGAAV).

It localises to the membrane. This is an uncharacterized protein from Arabidopsis thaliana (Mouse-ear cress).